Here is a 151-residue protein sequence, read N- to C-terminus: Small ribosomal subunit protein uS15z (151 aa).

The protein belongs to the universal ribosomal protein uS15 family.

The polypeptide is Small ribosomal subunit protein uS15z (Oryza sativa subsp. japonica (Rice)).